Consider the following 262-residue polypeptide: NAD-dependent glucose-6-phosphate dehydrogenase (262 aa).

NAD(+) contacts are provided by Asn90, Ser115, Tyr152, and Lys156. Tyr152 acts as the Proton acceptor in catalysis.

This sequence belongs to the NAD(P)-dependent epimerase/dehydratase family. Homodimer.

It catalyses the reaction D-glucose 6-phosphate + NAD(+) = 6-phospho-D-glucono-1,5-lactone + NADH + H(+). Its pathway is carbohydrate degradation; pentose phosphate pathway. Its function is as follows. Catalyzes the NAD-dependent oxidation of glucose 6-phosphate to 6-phosphogluconolactone. This is NAD-dependent glucose-6-phosphate dehydrogenase from Haloferax volcanii (strain ATCC 29605 / DSM 3757 / JCM 8879 / NBRC 14742 / NCIMB 2012 / VKM B-1768 / DS2) (Halobacterium volcanii).